The primary structure comprises 30 residues: Antifungal protein Lap (30 aa).

Displays antifungal activity against M.arachidicola and P.piricola, but not against R.solani, C.gossypii and C.comatus. Inhibits mycelial growth in P.piricola with an IC(50) of 70 nM. Displays very low cell-free translation inhibitory activity in a rabbit reticulocyte lysate system (IC(50)=70 uM) but is able to inhibit HIV-1 reverse transcriptase activity (IC(50)=5.2 nM). The sequence is that of Antifungal protein Lap from Lyophyllum shimeji (Hon-shimeji).